Here is a 114-residue protein sequence, read N- to C-terminus: Progonadoliberin-2 (114 aa).

Positions 1–24 (MASSRRGLLLLLMLLTAHPGPSEA) are cleaved as a signal peptide. Gly34 is modified (glycine amide). A disordered region spans residues 35–59 (GKRALSSAQDPQNALRPPAGSPAQA).

The protein belongs to the GnRH family.

It is found in the secreted. Its function is as follows. Stimulates the secretion of gonadotropins; it stimulates the secretion of both luteinizing and follicle-stimulating hormones. This is Progonadoliberin-2 (GNRH2) from Macaca mulatta (Rhesus macaque).